Consider the following 257-residue polypeptide: Thioredoxin-dependent peroxide reductase, mitochondrial (257 aa).

The N-terminal 62 residues, 1–62, are a transit peptide targeting the mitochondrion; sequence MAAAAGRLLW…SAFSTSSSFH (62 aa). The Thioredoxin domain occupies 64 to 222; sequence PAVTQHAPYF…TLRLVKAFQF (159 aa). At Lys-84 the chain carries N6-succinyllysine. Position 92 is an N6-acetyllysine; alternate (Lys-92). An N6-succinyllysine; alternate modification is found at Lys-92. Catalysis depends on Cys-109, which acts as the Cysteine sulfenic acid (-SOH) intermediate. Thr-147 is modified (phosphothreonine).

The protein belongs to the peroxiredoxin family. AhpC/Prx1 subfamily. In terms of assembly, homodimer; disulfide-linked, upon oxidation. 6 homodimers assemble to form a ring-like dodecamer. Interacts with NEK6. Interacts with LRRK2. Interacts with MAP3K13. Interacts with RPS6KC1 (via PX domain). Post-translationally, phosphorylated by LRRK2; phosphorylation reduces perodixase activity. In terms of processing, the enzyme can be inactivated by further oxidation of the cysteine sulfenic acid (C(P)-SOH) to sulphinic acid (C(P)-SO2H) and sulphonic acid (C(P)-SO3H) instead of its condensation to a disulfide bond. S-palmitoylated. In terms of tissue distribution, housekeeping-type gene preferentially expressed in murine erythroleukemia (MEL) cells.

The protein resides in the mitochondrion. The protein localises to the cytoplasm. It is found in the early endosome. The catalysed reaction is a hydroperoxide + [thioredoxin]-dithiol = an alcohol + [thioredoxin]-disulfide + H2O. Thiol-specific peroxidase that catalyzes the reduction of hydrogen peroxide and organic hydroperoxides to water and alcohols, respectively. Plays a role in cell protection against oxidative stress by detoxifying peroxides. Acts synergistically with MAP3K13 to regulate the activation of NF-kappa-B in the cytosol. Required for the maintenance of physical strength. This Mus musculus (Mouse) protein is Thioredoxin-dependent peroxide reductase, mitochondrial (Prdx3).